Consider the following 276-residue polypeptide: ADP-dependent (S)-NAD(P)H-hydrate dehydratase (276 aa).

One can recognise a YjeF C-terminal domain in the interval 7 to 275 (TEEHVRATLP…DILPRVWKRF (269 aa)). (6S)-NADPHX-binding residues include A42, G104, and H149. AMP contacts are provided by residues 186 to 190 (KGNQT) and G215. D216 provides a ligand contact to (6S)-NADPHX.

This sequence belongs to the NnrD/CARKD family. In terms of assembly, homotetramer. Mg(2+) serves as cofactor.

The enzyme catalyses (6S)-NADHX + ADP = AMP + phosphate + NADH + H(+). The catalysed reaction is (6S)-NADPHX + ADP = AMP + phosphate + NADPH + H(+). Functionally, catalyzes the dehydration of the S-form of NAD(P)HX at the expense of ADP, which is converted to AMP. Together with NAD(P)HX epimerase, which catalyzes the epimerization of the S- and R-forms, the enzyme allows the repair of both epimers of NAD(P)HX, a damaged form of NAD(P)H that is a result of enzymatic or heat-dependent hydration. The sequence is that of ADP-dependent (S)-NAD(P)H-hydrate dehydratase from Bacillus subtilis (strain 168).